The following is a 309-amino-acid chain: Putative F-box protein At4g05475 (309 aa).

The disordered stretch occupies residues 1–26 (MATSTTLQSLLMKEDEEQRNKRRTTS). Positions 37–84 (RINWVDLPPELTTSILLRLSVTDILDNARKLCRAWRRICKDPSMWRKI) constitute an F-box domain.

This chain is Putative F-box protein At4g05475, found in Arabidopsis thaliana (Mouse-ear cress).